Reading from the N-terminus, the 175-residue chain is Large ribosomal subunit protein uL10 (175 aa).

This sequence belongs to the universal ribosomal protein uL10 family. In terms of assembly, part of the ribosomal stalk of the 50S ribosomal subunit. The N-terminus interacts with L11 and the large rRNA to form the base of the stalk. The C-terminus forms an elongated spine to which L12 dimers bind in a sequential fashion forming a multimeric L10(L12)X complex.

In terms of biological role, forms part of the ribosomal stalk, playing a central role in the interaction of the ribosome with GTP-bound translation factors. This Mycobacterium sp. (strain KMS) protein is Large ribosomal subunit protein uL10.